A 182-amino-acid chain; its full sequence is Large ribosomal subunit protein bL25 (182 aa).

This sequence belongs to the bacterial ribosomal protein bL25 family. CTC subfamily. In terms of assembly, part of the 50S ribosomal subunit; part of the 5S rRNA/L5/L18/L25 subcomplex. Contacts the 5S rRNA. Binds to the 5S rRNA independently of L5 and L18.

Functionally, this is one of the proteins that binds to the 5S RNA in the ribosome where it forms part of the central protuberance. The protein is Large ribosomal subunit protein bL25 of Borreliella burgdorferi (strain ZS7) (Borrelia burgdorferi).